Here is a 147-residue protein sequence, read N- to C-terminus: Anti-sigma F factor (147 aa).

This sequence belongs to the anti-sigma-factor family.

It catalyses the reaction L-seryl-[protein] + ATP = O-phospho-L-seryl-[protein] + ADP + H(+). The catalysed reaction is L-threonyl-[protein] + ATP = O-phospho-L-threonyl-[protein] + ADP + H(+). Functionally, binds to sigma F and blocks its ability to form an RNA polymerase holoenzyme (E-sigma F). Phosphorylates SpoIIAA on a serine residue. This phosphorylation may enable SpoIIAA to act as an anti-anti-sigma factor that counteracts SpoIIAB and thus releases sigma F from inhibition. This Heyndrickxia coagulans (Weizmannia coagulans) protein is Anti-sigma F factor.